We begin with the raw amino-acid sequence, 501 residues long: DEAD-box ATP-dependent RNA helicase 36 (501 aa).

The segment at 1–68 (MEVDGEARPF…AAAVTEHAGD (68 aa)) is disordered. The span at 36–46 (EEPPNPSPSPA) shows a compositional bias: pro residues. Residues 59-68 (AAAVTEHAGD) show a composition bias toward low complexity. The short motif at 77 to 105 (STFAELGLSQWLVDVCDSLGMRVPTAVQR) is the Q motif element. One can recognise a Helicase ATP-binding domain in the interval 108-281 (IPRALEGRDV…ELSGNNSYFF (174 aa)). An ATP-binding site is contributed by 121-128 (AETGSGKT). Residues 229–232 (DEAD) carry the DEAD box motif. In terms of domain architecture, Helicase C-terminal spans 292–456 (TLKQLYIHVP…AYDGEMRDVN (165 aa)). The segment covering 473-486 (MADEGHEDKVQARK) has biased composition (basic and acidic residues). Positions 473 to 501 (MADEGHEDKVQARKEQKKRAQERKRKHDE) are disordered. Residues 475 to 501 (DEGHEDKVQARKEQKKRAQERKRKHDE) are a coiled coil. A compositionally biased stretch (basic residues) spans 487 to 501 (EQKKRAQERKRKHDE).

Belongs to the DEAD box helicase family. DDX49/DBP8 subfamily.

The enzyme catalyses ATP + H2O = ADP + phosphate + H(+). The polypeptide is DEAD-box ATP-dependent RNA helicase 36 (Oryza sativa subsp. japonica (Rice)).